Reading from the N-terminus, the 350-residue chain is tRNA uridine(34) hydroxylase (350 aa).

The 95-residue stretch at 146-240 folds into the Rhodanese domain; the sequence is DDPDAVFIDM…YARRAREQGL (95 aa). C200 functions as the Cysteine persulfide intermediate in the catalytic mechanism. Basic and acidic residues predominate over residues 319 to 328; sequence RRRRAGRENG. Residues 319–350 are disordered; that stretch reads RRRRAGRENGNKIFNKSRGRLNSKLSIPDPAE.

This sequence belongs to the TrhO family.

The catalysed reaction is uridine(34) in tRNA + AH2 + O2 = 5-hydroxyuridine(34) in tRNA + A + H2O. In terms of biological role, catalyzes oxygen-dependent 5-hydroxyuridine (ho5U) modification at position 34 in tRNAs. This Salmonella agona (strain SL483) protein is tRNA uridine(34) hydroxylase.